The sequence spans 377 residues: Nitric oxide reductase FlRd-NAD(+) reductase (377 aa).

The protein belongs to the FAD-dependent oxidoreductase family. Requires FAD as cofactor.

It is found in the cytoplasm. It catalyses the reaction 2 reduced [nitric oxide reductase rubredoxin domain] + NAD(+) + H(+) = 2 oxidized [nitric oxide reductase rubredoxin domain] + NADH. It participates in nitrogen metabolism; nitric oxide reduction. One of at least two accessory proteins for anaerobic nitric oxide (NO) reductase. Reduces the rubredoxin moiety of NO reductase. The sequence is that of Nitric oxide reductase FlRd-NAD(+) reductase from Shigella flexneri serotype 5b (strain 8401).